A 434-amino-acid chain; its full sequence is Carboxy-terminal-processing protease (434 aa).

An N-terminal signal peptide occupies residues 1–23 (MIRKVIFFVAGVFLSASLIVMAQ). The PDZ domain maps to 86-166 (DMRDSTKGEF…TPITLTINRF (81 aa)). Residues Ser294, Asp305, and Lys319 each act as charge relay system in the active site. Over residues 383–392 (HIKGKQESDK) the composition is skewed to basic and acidic residues. Residues 383–406 (HIKGKQESDKGSGSAAFVPRDPKD) form a disordered region.

It belongs to the peptidase S41A family. In terms of processing, may undergo autocatalytic processing at the C-terminus (398-434 or 425-434 missing).

It localises to the secreted. The catalysed reaction is The enzyme shows specific recognition of a C-terminal tripeptide, Xaa-Yaa-Zaa, in which Xaa is preferably Ala or Leu, Yaa is preferably Ala or Tyr, and Zaa is preferably Ala, but then cleaves at a variable distance from the C-terminus. A typical cleavage is -Ala-Ala-|-Arg-Ala-Ala-Lys-Glu-Asn-Tyr-Ala-Leu-Ala-Ala.. Functionally, involved in protection of the bacterium from thermal and osmotic stresses. This chain is Carboxy-terminal-processing protease (ctpA), found in Bartonella bacilliformis (strain ATCC 35685 / KC583 / Herrer 020/F12,63).